The following is a 330-amino-acid chain: Mas-related G-protein coupled receptor member X2 (330 aa).

Residues 1-33 (MDPTTPAWGNESTTMNGNDQALPLLCGKETLIP) are Extracellular-facing. Residues 34-54 (VFLILFIALVGLVGNGFVLWL) traverse the membrane as a helical segment. Residues 55-63 (LGFCMRRNA) are Cytoplasmic-facing. A helical membrane pass occupies residues 64–84 (FSVYVLSLAGADFLFLCFQLI). Topologically, residues 85–96 (NCLVYLSNFFCS) are extracellular. Residues 97–117 (ISIDFPSFFTTVMTCAYLAGL) form a helical membrane-spanning segment. Residues 118–144 (SMLSTISTERCLSVLWPIWYRCRRPRH) are Cytoplasmic-facing. The chain crosses the membrane as a helical span at residues 145 to 165 (LSAVVCVLLWALSLLLSILEG). Residues 166-184 (KFCGFFFSDGDSGWCQTFD) are Extracellular-facing. The helical transmembrane segment at 185–205 (FITAAWLIFLFMVLCGSSLAL) threads the bilayer. Residues 206–228 (LVRILCGSRGLPLTRLYLTILLT) are Cytoplasmic-facing. A helical transmembrane segment spans residues 229–249 (VLVFLLCGLPFGIQWFLILWI). Residues 250-264 (WENSDVLFCHIHPVS) lie on the Extracellular side of the membrane. The chain crosses the membrane as a helical span at residues 265–285 (VVLSSLNSSANPIIYFFVGTF). At 286 to 330 (RKQWRLQQPILKLALQRALQDTAEVDHSEGCFRQGTPEMSRSSLV) the chain is on the cytoplasmic side.

Belongs to the G-protein coupled receptor 1 family. Mas subfamily.

The protein resides in the cell membrane. Its function is as follows. Mast cell-specific receptor for basic secretagogues, i.e. cationic amphiphilic drugs, as well as endo- or exogenous peptides, consisting of a basic head group and a hydrophobic core. Recognizes and binds small molecules containing a cyclized tetrahydroisoquinoline (THIQ), such as non-steroidal neuromuscular blocking drugs (NMBDs), including tubocurarine and atracurium. In response to these compounds, mediates pseudo-allergic reactions characterized by histamine release, inflammation and airway contraction. This Pongo pygmaeus (Bornean orangutan) protein is Mas-related G-protein coupled receptor member X2 (MRGPRX2).